The sequence spans 260 residues: Putative hydro-lyase Bmul_5125/BMULJ_03391 (260 aa).

It belongs to the D-glutamate cyclase family.

This Burkholderia multivorans (strain ATCC 17616 / 249) protein is Putative hydro-lyase Bmul_5125/BMULJ_03391.